Consider the following 521-residue polypeptide: FAD-dependent monooxygenase mdpD (521 aa).

The tract at residues 1 to 48 (MTHFPVNIASDKQEFDPERWAKTPTTESSVNGENGTAPTSGLPSRHPS) is disordered. The span at 11 to 21 (DKQEFDPERWA) shows a compositional bias: basic and acidic residues. Positions 23–48 (TPTTESSVNGENGTAPTSGLPSRHPS) are enriched in polar residues. Positions 94 and 160 each coordinate FAD. Catalysis depends on residues Arg-244 and Tyr-271. 2 residues coordinate FAD: Asp-369 and Gly-382.

It belongs to the paxM FAD-dependent monooxygenase family. FAD is required as a cofactor.

Its pathway is secondary metabolite biosynthesis. Functionally, FAD-dependent monooxygenase; part of the gene cluster that mediates the biosynthesis of monodictyphenone, a prenyl xanthone derivative. The pathway begins with the synthesis of atrochrysone thioester by the polyketide synthase (PKS) mdpG. The atrochrysone carboxyl ACP thioesterase mdpF then breaks the thioester bond and releases the atrochrysone carboxylic acid from mdpG. The atrochrysone carboxylic acid is then converted to atrochrysone which is further transformed into emodin anthrone. The next step is performed by the anthrone oxygenase mdpH that catalyzes the oxidation of emodinanthrone to emodin. Emodin is further modified to yield monodictyphenone via several steps involving mdpB, mdpC mdpJ, mdpK and mdpL. These enzymes with xptA, xptB and xptC are also proposed to be involved in the synthesis of shamixanthone from emodin. Especially, direct reduction of emodin by the short chain dehydrogenase mdpC followed by dehydration catalyzed by the scytalone dehydratase-like protein mdpB gives loss of oxygen and formation of chrysophanol intermediate in two simple steps. This Emericella nidulans (strain FGSC A4 / ATCC 38163 / CBS 112.46 / NRRL 194 / M139) (Aspergillus nidulans) protein is FAD-dependent monooxygenase mdpD.